The sequence spans 302 residues: Glycine--tRNA ligase alpha subunit (302 aa).

It belongs to the class-II aminoacyl-tRNA synthetase family. Tetramer of two alpha and two beta subunits.

The protein resides in the cytoplasm. It carries out the reaction tRNA(Gly) + glycine + ATP = glycyl-tRNA(Gly) + AMP + diphosphate. This chain is Glycine--tRNA ligase alpha subunit, found in Haemophilus influenzae (strain 86-028NP).